The chain runs to 86 residues: DNA-directed RNA polymerase subunit omega (86 aa).

It belongs to the RNA polymerase subunit omega family. The RNAP catalytic core consists of 2 alpha, 1 beta, 1 beta' and 1 omega subunit. When a sigma factor is associated with the core the holoenzyme is formed, which can initiate transcription.

It catalyses the reaction RNA(n) + a ribonucleoside 5'-triphosphate = RNA(n+1) + diphosphate. Its function is as follows. Promotes RNA polymerase assembly. Latches the N- and C-terminal regions of the beta' subunit thereby facilitating its interaction with the beta and alpha subunits. The chain is DNA-directed RNA polymerase subunit omega from Psychrobacter sp. (strain PRwf-1).